The following is a 249-amino-acid chain: LexA repressor (249 aa).

The segment at 1–25 (MAAAATGGRATSQPKKTTKGLTPRQ) is disordered. Residues 45-65 (MREIGDTVGLASLSSVTHQLS) constitute a DNA-binding region (H-T-H motif). Active-site for autocatalytic cleavage activity residues include Ser-173 and Lys-210.

Belongs to the peptidase S24 family. As to quaternary structure, homodimer.

The catalysed reaction is Hydrolysis of Ala-|-Gly bond in repressor LexA.. Functionally, represses a number of genes involved in the response to DNA damage (SOS response), including recA and lexA. In the presence of single-stranded DNA, RecA interacts with LexA causing an autocatalytic cleavage which disrupts the DNA-binding part of LexA, leading to derepression of the SOS regulon and eventually DNA repair. The chain is LexA repressor from Pseudarthrobacter chlorophenolicus (strain ATCC 700700 / DSM 12829 / CIP 107037 / JCM 12360 / KCTC 9906 / NCIMB 13794 / A6) (Arthrobacter chlorophenolicus).